A 548-amino-acid chain; its full sequence is Glucose-6-phosphate isomerase (548 aa).

The active-site Proton donor is Glu-353. Catalysis depends on residues His-384 and Lys-512.

This sequence belongs to the GPI family.

The protein localises to the cytoplasm. It catalyses the reaction alpha-D-glucose 6-phosphate = beta-D-fructose 6-phosphate. It participates in carbohydrate biosynthesis; gluconeogenesis. Its pathway is carbohydrate degradation; glycolysis; D-glyceraldehyde 3-phosphate and glycerone phosphate from D-glucose: step 2/4. Its function is as follows. Catalyzes the reversible isomerization of glucose-6-phosphate to fructose-6-phosphate. This Pseudoalteromonas translucida (strain TAC 125) protein is Glucose-6-phosphate isomerase.